The primary structure comprises 140 residues: Transmembrane protein 107 (140 aa).

2 helical membrane passes run 7–27 (LVPS…TLFW) and 53–73 (LVAA…GFLS). An N-linked (GlcNAc...) asparagine glycan is attached at N79. Helical transmembrane passes span 83–103 (SLLS…FVFE) and 113–133 (IFTF…IAVF).

Part of the tectonic-like complex (also named B9 complex). Interacts with TMEM237, TMEM231, MKS1 and TMEM216.

It localises to the membrane. The protein resides in the cell projection. It is found in the cilium. In terms of biological role, plays a role in cilia formation and embryonic patterning. Requires for normal Sonic hedgehog (Shh) signaling in the neural tube and acts in combination with GLI2 and GLI3 to pattern ventral and intermediate neuronal cell types. During ciliogenesis regulates the ciliary transition zone localization of some MKS complex proteins. In Mus musculus (Mouse), this protein is Transmembrane protein 107.